The sequence spans 386 residues: Outer membrane protein assembly factor BamB (386 aa).

Residues 1 to 25 (MMRNSRPGRAWRGAVVLTGLLALSG) form the signal peptide. Cys-26 carries N-palmitoyl cysteine lipidation. The S-diacylglycerol cysteine moiety is linked to residue Cys-26.

It belongs to the BamB family. Part of the Bam complex.

The protein resides in the cell outer membrane. In terms of biological role, part of the outer membrane protein assembly complex, which is involved in assembly and insertion of beta-barrel proteins into the outer membrane. The protein is Outer membrane protein assembly factor BamB of Bordetella pertussis (strain Tohama I / ATCC BAA-589 / NCTC 13251).